The primary structure comprises 306 residues: Flavin adenine dinucleotide synthase (306 aa).

FAD contacts are provided by residues Ser-59, Ile-107, Gly-164, 182–185 (DSNW), Arg-190, and Arg-300.

The protein belongs to the PAPS reductase family. FAD1 subfamily.

The protein resides in the cytoplasm. It carries out the reaction FMN + ATP + H(+) = FAD + diphosphate. It participates in cofactor biosynthesis; FAD biosynthesis; FAD from FMN: step 1/1. In terms of biological role, catalyzes the adenylation of flavin mononucleotide (FMN) to form flavin adenine dinucleotide (FAD) coenzyme. The chain is Flavin adenine dinucleotide synthase from Saccharomyces cerevisiae (strain ATCC 204508 / S288c) (Baker's yeast).